Reading from the N-terminus, the 123-residue chain is T-complex protein 1 subunit alpha (123 aa).

Gly68 contacts ADP.

The protein belongs to the TCP-1 chaperonin family. In terms of assembly, component of the chaperonin-containing T-complex (TRiC), a hexadecamer composed of two identical back-to-back stacked rings enclosing a protein folding chamber. Each ring is made up of eight different subunits: TCP1/CCT1, CCT2, CCT3, CCT4, CCT5, CCT6A/CCT6, CCT7, CCT8. Interacts with PACRG. Interacts with GBA1. Interacts with DLEC1.

Its subcellular location is the cytoplasm. It localises to the cytosol. The protein resides in the cytoskeleton. It is found in the microtubule organizing center. The protein localises to the centrosome. It carries out the reaction ATP + H2O = ADP + phosphate + H(+). Its function is as follows. Component of the chaperonin-containing T-complex (TRiC), a molecular chaperone complex that assists the folding of actin, tubulin and other proteins upon ATP hydrolysis. The TRiC complex mediates the folding of WRAP53/TCAB1, thereby regulating telomere maintenance. As part of the TRiC complex may play a role in the assembly of BBSome, a complex involved in ciliogenesis regulating transports vesicles to the cilia. The chain is T-complex protein 1 subunit alpha from Mesocricetus auratus (Golden hamster).